Reading from the N-terminus, the 352-residue chain is Neuronal growth regulator 1 (352 aa).

An N-terminal signal peptide occupies residues 1–35 (MVPLVRGAGGSHQWLAAVLLGLCCLLPAGRLAAPG). Ig-like C2-type domains follow at residues 36 to 132 (GDFP…VHLT), 137 to 219 (PKIF…KVTV), and 223 to 311 (PTIQ…LPLN). Cys58 and Cys116 are disulfide-bonded. Asn71 and Asn153 each carry an N-linked (GlcNAc...) asparagine glycan. Intrachain disulfides connect Cys158/Cys201 and Cys243/Cys295. 4 N-linked (GlcNAc...) asparagine glycosylation sites follow: Asn273, Asn284, Asn292, and Asn305. Gly322 carries GPI-anchor amidated glycine lipidation. A propeptide spans 323 to 352 (DAEVLFSCWYLVLTLSSLTSIFYLKNIILH) (removed in mature form).

It belongs to the immunoglobulin superfamily. IgLON family. As to quaternary structure, interacts with CEPU-1 and LAMP. In terms of processing, glycosylated. In terms of tissue distribution, expressed in embryonic retina, telencephalon, tectum, cerebellum and diencephalon (at protein level).

The protein localises to the cell membrane. Its function is as follows. May be involved in cell-adhesion. May participate in the regulation of neurite outgrowth in the developing brain. This Gallus gallus (Chicken) protein is Neuronal growth regulator 1 (NEGR1).